Consider the following 190-residue polypeptide: Frataxin homolog, mitochondrial (190 aa).

Belongs to the frataxin family. In terms of assembly, monomer (probable predominant form). Oligomer. Interacts with IscU. Component of the mitochondrial core iron-sulfur cluster (ISC) assembly complex at least composed of the cysteine desulfurase Nfs1, the scaffold protein IscU, the accessory protein bcn92/Isd11/Lyrm4, and probably fh/frataxin.

The protein localises to the mitochondrion. The enzyme catalyses 4 Fe(2+) + O2 + 4 H(+) = 4 Fe(3+) + 2 H2O. Functionally, promotes the biosynthesis of heme as well as the assembly and repair of iron-sulfur clusters by delivering Fe(2+) to proteins involved in these pathways. May play a role in the protection against iron-catalyzed oxidative stress through its ability to catalyze the oxidation of Fe(2+) to Fe(3+). May be able to store large amounts of the metal in the form of a ferrihydrite mineral by oligomerization. Required for ecdysteroidogenesis in the prothoracic gland which is necessary for larval to pupal transition. The protein is Frataxin homolog, mitochondrial of Drosophila melanogaster (Fruit fly).